Reading from the N-terminus, the 500-residue chain is Ent-kaurene oxidase P450-4 (500 aa).

The chain crosses the membrane as a helical span at residues 6–26; sequence VHWLIYVAFGAWLCSYVIHVL. N-linked (GlcNAc...) asparagine glycosylation is present at asparagine 240. Heme is bound at residue cysteine 441. An N-linked (GlcNAc...) asparagine glycan is attached at asparagine 475.

It belongs to the cytochrome P450 family. The cofactor is heme.

The protein resides in the membrane. The enzyme catalyses ent-kaur-16-ene + 3 reduced [NADPH--hemoprotein reductase] + 3 O2 = ent-kaur-16-en-19-oate + 3 oxidized [NADPH--hemoprotein reductase] + 4 H2O + 4 H(+). Its pathway is plant hormone biosynthesis; gibberellin biosynthesis. Ent-kaurene oxidase; part of the gene cluster that mediates the biosynthesis of gibberellins (GAs), diterpenoids that may provide a selective advantage during infection of the preferred host plant, rice. Gibberellins (GAs) are diterpenoids and are synthesized via the mevalonate pathway. Biosynthesis of the major metabolite GA3 (gibberellic acid) from geranylgeranyl diphosphate (GGPP) requires 13 steps. The GGPP produced by the geranylgeranyl diphosphate synthase GGS2 is converted to ent-kaurene via ent-copalyldiphosphate in a two-step cyclization reaction performed by the bifunctional ent-copalyl diphosphate synthase/ent-kaurene synthase enzyme (CPS/KS). Ent-Kaurene is metabolized to GAs by a series of oxidation reactions catalyzed by cytochrome P450 monooxygenases. Cytochrome P450 monooxygenase P450-4 is an ent-kaurene oxidase that catalyzes the three oxidation steps between ent-kaurene and ent-kaurenoic acid. The highly multifunctional cytochrome P450 monooxygenase P450-1 then catalyzes four steps involving oxidation at two carbon atoms, in the main pathway from ent-kaurenoic acid to GA14 via GA12-aldehyde as well as producing kaurenolides and fujenoic acids as by-products. The cytochrome P450 monooxygenase P450-2 then converts GA14 to GA4 by removal of C-20. GA4 is further converted to GA7 by the GA4 desaturase DES via 1,2-desaturation before cytochrome P450 monooxygenase P450-3, a 13-hydroxylase, hydroxylates GA7 to GA3, the final product of the GA-biosynthetic pathway. This chain is Ent-kaurene oxidase P450-4, found in Gibberella fujikuroi (strain CBS 195.34 / IMI 58289 / NRRL A-6831) (Bakanae and foot rot disease fungus).